The following is a 207-amino-acid chain: 2,3-bisphosphoglycerate-dependent phosphoglycerate mutase (207 aa).

Substrate contacts are provided by residues 9 to 16, 22 to 23, arginine 61, 88 to 91, lysine 99, 115 to 116, and 159 to 160; these read RHGQSDWN, TG, ERDY, RR, and GN. The Tele-phosphohistidine intermediate role is filled by histidine 10. Glutamate 88 (proton donor/acceptor) is an active-site residue.

It belongs to the phosphoglycerate mutase family. BPG-dependent PGAM subfamily. Homodimer.

The enzyme catalyses (2R)-2-phosphoglycerate = (2R)-3-phosphoglycerate. Its pathway is carbohydrate degradation; glycolysis; pyruvate from D-glyceraldehyde 3-phosphate: step 3/5. Its function is as follows. Catalyzes the interconversion of 2-phosphoglycerate and 3-phosphoglycerate. This Beijerinckia indica subsp. indica (strain ATCC 9039 / DSM 1715 / NCIMB 8712) protein is 2,3-bisphosphoglycerate-dependent phosphoglycerate mutase.